The chain runs to 358 residues: Dual-specificity RNA methyltransferase RlmN (358 aa).

Catalysis depends on Glu-91, which acts as the Proton acceptor. Residues 98–335 form the Radical SAM core domain; it reads SQGRITQCLS…AIIRKSKGAD (238 aa). Cys-105 and Cys-340 are disulfide-bonded. 3 residues coordinate [4Fe-4S] cluster: Cys-112, Cys-116, and Cys-119. Residues 164-165, Ser-196, 219-221, and Asn-295 contribute to the S-adenosyl-L-methionine site; these read GE and SLH. Cys-340 (S-methylcysteine intermediate) is an active-site residue.

The protein belongs to the radical SAM superfamily. RlmN family. [4Fe-4S] cluster serves as cofactor.

It localises to the cytoplasm. The catalysed reaction is adenosine(2503) in 23S rRNA + 2 reduced [2Fe-2S]-[ferredoxin] + 2 S-adenosyl-L-methionine = 2-methyladenosine(2503) in 23S rRNA + 5'-deoxyadenosine + L-methionine + 2 oxidized [2Fe-2S]-[ferredoxin] + S-adenosyl-L-homocysteine. The enzyme catalyses adenosine(37) in tRNA + 2 reduced [2Fe-2S]-[ferredoxin] + 2 S-adenosyl-L-methionine = 2-methyladenosine(37) in tRNA + 5'-deoxyadenosine + L-methionine + 2 oxidized [2Fe-2S]-[ferredoxin] + S-adenosyl-L-homocysteine. Its function is as follows. Specifically methylates position 2 of adenine 2503 in 23S rRNA and position 2 of adenine 37 in tRNAs. m2A2503 modification seems to play a crucial role in the proofreading step occurring at the peptidyl transferase center and thus would serve to optimize ribosomal fidelity. This Oleidesulfovibrio alaskensis (strain ATCC BAA-1058 / DSM 17464 / G20) (Desulfovibrio alaskensis) protein is Dual-specificity RNA methyltransferase RlmN.